Consider the following 513-residue polypeptide: Glutamyl-tRNA(Gln) amidotransferase subunit A (513 aa).

Residues Lys-85 and Ser-160 each act as charge relay system in the active site. The Acyl-ester intermediate role is filled by Ser-184.

It belongs to the amidase family. GatA subfamily. In terms of assembly, heterotrimer of A, B and C subunits.

It catalyses the reaction L-glutamyl-tRNA(Gln) + L-glutamine + ATP + H2O = L-glutaminyl-tRNA(Gln) + L-glutamate + ADP + phosphate + H(+). Allows the formation of correctly charged Gln-tRNA(Gln) through the transamidation of misacylated Glu-tRNA(Gln) in organisms which lack glutaminyl-tRNA synthetase. The reaction takes place in the presence of glutamine and ATP through an activated gamma-phospho-Glu-tRNA(Gln). In Bifidobacterium longum (strain NCC 2705), this protein is Glutamyl-tRNA(Gln) amidotransferase subunit A.